The following is a 241-amino-acid chain: Beta-nerve growth factor (241 aa).

The N-terminal stretch at 1 to 18 (MSMLFYTLITAFLIGIQA) is a signal peptide. The propeptide occupies 19–121 (EPHSESNVPA…PFNRTHRSKR (103 aa)). N-linked (GlcNAc...) asparagine glycosylation is found at Asn-69 and Asn-114. Intrachain disulfides connect Cys-136–Cys-201, Cys-179–Cys-229, and Cys-189–Cys-231. Residues Tyr-173 and Lys-209 each coordinate a 1-acyl-sn-glycero-3-phospho-(1D-myo-inositol). Lys-209 provides a ligand contact to a 1-acyl-sn-glycero-3-phospho-L-serine.

It belongs to the NGF-beta family. As to quaternary structure, homodimer. The homodimer interacts with a single NTRK1 chain. The homodimer interacts with a single NGFR chain. The NGF dimer interacts with a single SORCS2 chain (via extracellular domain). The NGF precursor (proNGF) binds to a receptor complex formed by SORT1 and NGFR, which leads to NGF endocytosis. Both mature NGF and the immature NGF precursor (proNGF) interact with SORCS2 and with the heterodimer formed by SORCS2 and NGFR (via extracellular domains). The NGF precursor (proNGF) has much higher affinity for SORCS2 than mature NGF. The NGF precursor (proNGF) has much higher affinity for SORT1 than mature NGF. Interacts with ADAM10 in a divalent cation-dependent manner. Interaction with SORCS3.

It localises to the secreted. It is found in the endosome lumen. Functionally, nerve growth factor is important for the development and maintenance of the sympathetic and sensory nervous systems. Extracellular ligand for the NTRK1 and NGFR receptors, activates cellular signaling cascades to regulate neuronal proliferation, differentiation and survival. The immature NGF precursor (proNGF) functions as a ligand for the heterodimeric receptor formed by SORCS2 and NGFR, and activates cellular signaling cascades that lead to inactivation of RAC1 and/or RAC2, reorganization of the actin cytoskeleton and neuronal growth cone collapse. In contrast to mature NGF, the precursor form (proNGF) promotes neuronal apoptosis (in vitro). Inhibits metalloproteinase-dependent proteolysis of platelet glycoprotein VI. Binds lysophosphatidylinositol and lysophosphatidylserine between the two chains of the homodimer. The lipid-bound form promotes histamine relase from mast cells, contrary to the lipid-free form. This Homo sapiens (Human) protein is Beta-nerve growth factor (NGF).